Consider the following 256-residue polypeptide: Omega-amidase YafV (256 aa).

One can recognise a CN hydrolase domain in the interval Leu4 to Met234. The Proton acceptor role is filled by Glu42. Lys107 serves as the catalytic Proton donor. The active-site Nucleophile is Cys141.

It belongs to the carbon-nitrogen hydrolase superfamily. NIT1/NIT2 family.

It catalyses the reaction a monoamide of a dicarboxylate + H2O = a dicarboxylate + NH4(+). Its function is as follows. Hydrolyzes alpha-ketoglutaramate (a-KGM) to alpha-ketoglutarate (alpha-KG) and ammonia, has weak activity on L-glutamine, almost no activity on deaminated glutathione (dGSH) and none on glutathione. May function as a metabolite repair enzyme. The protein is Omega-amidase YafV (yafV) of Escherichia coli (strain K12).